The chain runs to 248 residues: 2,3-bisphosphoglycerate-dependent phosphoglycerate mutase (248 aa).

Residues 7–14 (RHGESIWN), 20–21 (TG), R59, 86–89 (ERHY), K97, 113–114 (RR), and 182–183 (GN) each bind substrate. H8 acts as the Tele-phosphohistidine intermediate in catalysis. The Proton donor/acceptor role is filled by E86.

Belongs to the phosphoglycerate mutase family. BPG-dependent PGAM subfamily.

It catalyses the reaction (2R)-2-phosphoglycerate = (2R)-3-phosphoglycerate. It participates in carbohydrate degradation; glycolysis; pyruvate from D-glyceraldehyde 3-phosphate: step 3/5. Catalyzes the interconversion of 2-phosphoglycerate and 3-phosphoglycerate. The polypeptide is 2,3-bisphosphoglycerate-dependent phosphoglycerate mutase (Methylacidiphilum infernorum (isolate V4) (Methylokorus infernorum (strain V4))).